The primary structure comprises 517 residues: Tyrosine-protein kinase Src42A (517 aa).

Residues 1–47 (MGNCLTTQKGEPDKPADRIKLDDPPTIGVGVGVPQIPMPSHAGQPPE) form a disordered region. The span at 10-23 (GEPDKPADRIKLDD) shows a compositional bias: basic and acidic residues. Positions 63–124 (ANAKIFVALY…PSNYVAKLKS (62 aa)) constitute an SH3 domain. In terms of domain architecture, SH2 spans 130–222 (WYFRKIKRIE…GLCVNLCKPC (93 aa)). A Protein kinase domain is found at 248–504 (LKFVRKLGSG…TLQWKLEDFY (257 aa)). Residues 254-262 (LGSGQFGDV) and lysine 276 contribute to the ATP site. Catalysis depends on aspartate 370, which acts as the Proton acceptor.

This sequence belongs to the protein kinase superfamily. Tyr protein kinase family. SRC subfamily. In terms of tissue distribution, ubiquitous in early embryos, in stages 13-16 expression is seen in visceral mesoderm, hindgut, brain, anal pads and ventral ganglions. In larvae, expression is in CNS, wing disk, leg disk and photoreceptor precursors in the eye-antenna disks posterior to the morphogenetic furrow.

It carries out the reaction L-tyrosyl-[protein] + ATP = O-phospho-L-tyrosyl-[protein] + ADP + H(+). In terms of biological role, required directly or indirectly for the phosphorylation of drpr which is necessary for the interaction of drpr with shark and subsequent glial phagocytic activity. Together with drpr and shark, promotes the migration of macrophages to sites of wounding as part of a signaling cascade where Src42A detects production of hydrogen peroxide at wound sites which triggers phosphorylation of drpr and subsequent recruitment and activation of shark. Essential for correct eye morphogenesis (ommatidial R7 neuron formation) which requires the Ras1/MAPK signal transduction pathway. May be involved in the regulation of cytoskeleton organization and cell-cell contacts in developing ommatidia. Involved in phosphorylation of Dscam1, a cell surface receptor involved in targeting of growing axons during eye morphogenesis, and its interaction partner the SH2/SH3 adapter protein dock/dreadlocks. During embryogenesis, involved in regulation of dorsal closure where it may have a role in activating the JNK pathway in leading edge cells during this process. The sequence is that of Tyrosine-protein kinase Src42A from Drosophila melanogaster (Fruit fly).